A 429-amino-acid polypeptide reads, in one-letter code: MDRIRIRGGSELNGTIPISGAKNAALPLMIASLLTDDTLTLENVPHLADVEQLIRILGNHGVDYSVNGRRENQDKGYSRTVHFTARSIVDTTAPYELVSKMRASFWVIGPLLARMGEAKVSLPGGCAIGTRPVDLFIEGLRSLGAAIDIEGGYVIARAKDGLVGTRFRFPKVSVGATHVLMMAASLARGQTVLENAAREPEIVNLADCLNAMGAKISGAGTPTITIEGVTSLSGARHRIIPDRIETGTYALAVAMAGGDVMLEGARADLLETALDVIQQTGAEITRADTGIRIRRNGNGISPVDITTEPFPGFPTDLQAQFMAVMTKAKGNSRITETIFENRFMHVQELARLGARISLSGQEAVVEGVDRLKGAPVMATDLRASVSLLIAGLAAEGETTVNRVYHLDRGFERLEEKLSSCGADIERISG.

22–23 provides a ligand contact to phosphoenolpyruvate; that stretch reads KN. R102 is a binding site for UDP-N-acetyl-alpha-D-glucosamine. C126 acts as the Proton donor in catalysis. C126 carries the 2-(S-cysteinyl)pyruvic acid O-phosphothioketal modification. UDP-N-acetyl-alpha-D-glucosamine contacts are provided by residues 131 to 135, 171 to 174, D316, and I338; these read RPVDL and KVSV.

The protein belongs to the EPSP synthase family. MurA subfamily.

Its subcellular location is the cytoplasm. It catalyses the reaction phosphoenolpyruvate + UDP-N-acetyl-alpha-D-glucosamine = UDP-N-acetyl-3-O-(1-carboxyvinyl)-alpha-D-glucosamine + phosphate. The protein operates within cell wall biogenesis; peptidoglycan biosynthesis. Functionally, cell wall formation. Adds enolpyruvyl to UDP-N-acetylglucosamine. In Chelativorans sp. (strain BNC1), this protein is UDP-N-acetylglucosamine 1-carboxyvinyltransferase.